Reading from the N-terminus, the 265-residue chain is Tetrapyrrole-binding protein, chloroplastic (265 aa).

Residues 1–24 (MATTNSLHHHHHSSPSYTHHRNNL) form a disordered region. The N-terminal 69 residues, 1 to 69 (MATTNSLHHH…TAVSAVSTTN (69 aa)), are a transit peptide targeting the chloroplast. Basic residues predominate over residues 7–23 (LHHHHHSSPSYTHHRNN).

In terms of assembly, interacts with CHLH, the protoporphyrin IX-binding subunit of Mg-chelatase. Monomer or extremely compact dimer.

Its subcellular location is the plastid. It is found in the chloroplast membrane. In terms of biological role, regulates chlorophyll synthesis and plastid-to-nucleus signal transduction by binding both the product and the substrate of Mg-chelatase, an enzyme that produces magnesium-protoporphyrin IX (Mg-Proto). Also activates Mg-chelatase. Neither binds abscisic acid (ABA) nor is involved in ABA signaling. The sequence is that of Tetrapyrrole-binding protein, chloroplastic (GUN4) from Arabidopsis thaliana (Mouse-ear cress).